Consider the following 359-residue polypeptide: tRNA-specific 2-thiouridylase MnmA (359 aa).

Residues 6–13 (AMSGGVDS) and leucine 32 each bind ATP. Residue cysteine 97 is the Nucleophile of the active site. Cysteines 97 and 195 form a disulfide. Glycine 121 is a binding site for ATP. The interval 144-146 (KDQ) is interaction with tRNA. Cysteine 195 acts as the Cysteine persulfide intermediate in catalysis.

This sequence belongs to the MnmA/TRMU family.

The protein localises to the cytoplasm. It carries out the reaction S-sulfanyl-L-cysteinyl-[protein] + uridine(34) in tRNA + AH2 + ATP = 2-thiouridine(34) in tRNA + L-cysteinyl-[protein] + A + AMP + diphosphate + H(+). Functionally, catalyzes the 2-thiolation of uridine at the wobble position (U34) of tRNA, leading to the formation of s(2)U34. The protein is tRNA-specific 2-thiouridylase MnmA of Tropheryma whipplei (strain TW08/27) (Whipple's bacillus).